The following is a 513-amino-acid chain: ATP synthase subunit alpha (513 aa).

169-176 (GDRQTGKT) serves as a coordination point for ATP.

Belongs to the ATPase alpha/beta chains family. In terms of assembly, F-type ATPases have 2 components, CF(1) - the catalytic core - and CF(0) - the membrane proton channel. CF(1) has five subunits: alpha(3), beta(3), gamma(1), delta(1), epsilon(1). CF(0) has three main subunits: a(1), b(2) and c(9-12). The alpha and beta chains form an alternating ring which encloses part of the gamma chain. CF(1) is attached to CF(0) by a central stalk formed by the gamma and epsilon chains, while a peripheral stalk is formed by the delta and b chains.

Its subcellular location is the cell inner membrane. It carries out the reaction ATP + H2O + 4 H(+)(in) = ADP + phosphate + 5 H(+)(out). In terms of biological role, produces ATP from ADP in the presence of a proton gradient across the membrane. The alpha chain is a regulatory subunit. This chain is ATP synthase subunit alpha, found in Klebsiella pneumoniae (strain 342).